Consider the following 314-residue polypeptide: RNA 2'-O-methyltransferase FBLL1 (314 aa).

A compositionally biased stretch (gly residues) spans 1 to 59 (MKPAGGRGGWGWGGGKGGSKGGDTGSGTKGGFGARTRGSSGGGRGRGRGGGGGGGGGGG). Residues 1–82 (MKPAGGRGGW…RRKKGITVSV (82 aa)) form a disordered region. Arg7 bears the Omega-N-methylarginine mark. The segment covering 64 to 77 (RGGPGKNKNRRKKG) has biased composition (basic residues). S-adenosyl-L-methionine contacts are provided by residues 166-167 (TT), 185-186 (EF), 210-211 (DA), and 230-233 (DVAQ).

It belongs to the methyltransferase superfamily. Fibrillarin family. In terms of assembly, component of a box C/D small nucleolar ribonucleoprotein (snoRNP) complex composed of FBLL1, SNU13/NHP2L1, NOP56 and NOP58 and a guide snoRNA which mediates 2'-hydroxyl ribose methylation in RNAs.

Its subcellular location is the nucleus. It is found in the nucleolus. It catalyses the reaction a ribonucleotide in RNA + S-adenosyl-L-methionine = a 2'-O-methylribonucleotide in RNA + S-adenosyl-L-homocysteine + H(+). In terms of biological role, S-adenosyl-L-methionine-dependent RNA methyltransferase that catalyzes 2'-hydroxyl ribose methylation in RNAs. Functions as part of box C/D small nucleolar ribonucleoprotein (snoRNP) complexes, where guide snoRNAs ensure methylation specificity through base pairing with RNA substrates. Exhibits broad substrate specificity, methylating multiple sites on ribosomal RNAs (rRNAs) and messenger RNAs (mRNAs) depending on the guide snoRNA incorporated in the complex. Specifically expressed in brain, it regulates the expression of GAP43 by stabilizing its mRNA through methylation and thereby plays an indirect role in neuronal differentiation. This Mus musculus (Mouse) protein is RNA 2'-O-methyltransferase FBLL1.